The sequence spans 640 residues: PTS system mannitol-specific EIICBA component (640 aa).

Residues 12 to 343 form the PTS EIIC type-2 domain; that stretch reads LGRFLSAMIM…LKISNRNHYV (332 aa). Transmembrane regions (helical) follow at residues 24 to 45, 50 to 70, 134 to 155, 165 to 185, 273 to 292, and 313 to 334; these read ISVFIAWGIISGLFIKSGWCPN, KVLSPISVYLFPILIANTGGY, SVGILGVLLLFISFLCIGPMIE, VNLMINNHLLPFIAILIEPAK, LILGSITGIFILIVLRGGLI, and VINLLAIIISFLVSFLVSCMLL. Positions 379-475 constitute a PTS EIIB type-2 domain; it reads RNIIFACDAG…YLVENNLDNN (97 aa). The active-site Phosphocysteine intermediate; for EIIB activity is C385. Phosphocysteine; by EIIA is present on C385. Residues 496–638 form the PTS EIIA type-2 domain; sequence FSLTKENIFL…DDVLYLFSRK (143 aa). H556 serves as the catalytic Tele-phosphohistidine intermediate; for EIIA activity. H556 is modified (phosphohistidine; by HPr).

Homodimer. An intramolecular phosphotransfer takes places between His-556 and Cys-385.

Its subcellular location is the cell inner membrane. It carries out the reaction D-mannitol(out) + N(pros)-phospho-L-histidyl-[protein] = D-mannitol 1-phosphate(in) + L-histidyl-[protein]. Its function is as follows. The phosphoenolpyruvate-dependent sugar phosphotransferase system (sugar PTS), a major carbohydrate active transport system, catalyzes the phosphorylation of incoming sugar substrates concomitantly with their translocation across the cell membrane. This system is involved in D-mannitol transport. The sequence is that of PTS system mannitol-specific EIICBA component (mtlA) from Buchnera aphidicola subsp. Baizongia pistaciae (strain Bp).